Reading from the N-terminus, the 276-residue chain is NH(3)-dependent NAD(+) synthetase (276 aa).

An ATP-binding site is contributed by 43 to 50; it reads GISGGVDS. Aspartate 49 provides a ligand contact to Mg(2+). Residue arginine 146 coordinates deamido-NAD(+). An ATP-binding site is contributed by threonine 166. Glutamate 171 contributes to the Mg(2+) binding site. Deamido-NAD(+)-binding residues include lysine 179 and aspartate 186. Residues lysine 195 and threonine 217 each contribute to the ATP site. Position 266–267 (266–267) interacts with deamido-NAD(+); that stretch reads HK.

This sequence belongs to the NAD synthetase family. Homodimer.

It carries out the reaction deamido-NAD(+) + NH4(+) + ATP = AMP + diphosphate + NAD(+) + H(+). Its pathway is cofactor biosynthesis; NAD(+) biosynthesis; NAD(+) from deamido-NAD(+) (ammonia route): step 1/1. Catalyzes the ATP-dependent amidation of deamido-NAD to form NAD. Uses ammonia as a nitrogen source. In Vibrio parahaemolyticus serotype O3:K6 (strain RIMD 2210633), this protein is NH(3)-dependent NAD(+) synthetase.